Reading from the N-terminus, the 568-residue chain is Sulfite reductase [NADPH] hemoprotein beta-component (568 aa).

Cys-425, Cys-431, Cys-470, and Cys-474 together coordinate [4Fe-4S] cluster. Position 474 (Cys-474) interacts with siroheme.

It belongs to the nitrite and sulfite reductase 4Fe-4S domain family. Alpha(8)-beta(8). The alpha component is a flavoprotein, the beta component is a hemoprotein. Siroheme is required as a cofactor. Requires [4Fe-4S] cluster as cofactor.

The enzyme catalyses hydrogen sulfide + 3 NADP(+) + 3 H2O = sulfite + 3 NADPH + 4 H(+). It participates in sulfur metabolism; hydrogen sulfide biosynthesis; hydrogen sulfide from sulfite (NADPH route): step 1/1. Its function is as follows. Component of the sulfite reductase complex that catalyzes the 6-electron reduction of sulfite to sulfide. This is one of several activities required for the biosynthesis of L-cysteine from sulfate. The protein is Sulfite reductase [NADPH] hemoprotein beta-component of Xanthomonas oryzae pv. oryzae (strain MAFF 311018).